The following is an 81-amino-acid chain: ATP synthase subunit c (81 aa).

The next 2 helical transmembrane spans lie at 5-25 (IAAG…IGAG) and 57-77 (VGLV…FVFA).

The protein belongs to the ATPase C chain family. As to quaternary structure, F-type ATPases have 2 components, F(1) - the catalytic core - and F(0) - the membrane proton channel. F(1) has five subunits: alpha(3), beta(3), gamma(1), delta(1), epsilon(1). F(0) has three main subunits: a(1), b(2) and c(10-14). The alpha and beta chains form an alternating ring which encloses part of the gamma chain. F(1) is attached to F(0) by a central stalk formed by the gamma and epsilon chains, while a peripheral stalk is formed by the delta and b chains.

The protein resides in the cell membrane. F(1)F(0) ATP synthase produces ATP from ADP in the presence of a proton or sodium gradient. F-type ATPases consist of two structural domains, F(1) containing the extramembraneous catalytic core and F(0) containing the membrane proton channel, linked together by a central stalk and a peripheral stalk. During catalysis, ATP synthesis in the catalytic domain of F(1) is coupled via a rotary mechanism of the central stalk subunits to proton translocation. Its function is as follows. Key component of the F(0) channel; it plays a direct role in translocation across the membrane. A homomeric c-ring of between 10-14 subunits forms the central stalk rotor element with the F(1) delta and epsilon subunits. This Mycobacterium marinum (strain ATCC BAA-535 / M) protein is ATP synthase subunit c.